Consider the following 181-residue polypeptide: Ubiquitin-conjugating enzyme E2 19 (181 aa).

Over residues 1–10 (MATVNGYTGN) the composition is skewed to polar residues. The tract at residues 1 to 33 (MATVNGYTGNTPAATTPAATGSKQSAPPTKTVD) is disordered. Residues 11–20 (TPAATTPAAT) are compositionally biased toward low complexity. The UBC core domain maps to 36–181 (SVLKRLQSEL…VEKLYKPLNA (146 aa)). Residue Cys-120 is the Glycyl thioester intermediate of the active site.

It belongs to the ubiquitin-conjugating enzyme family. As to quaternary structure, interacts with OR. Binds to LOT1. In terms of tissue distribution, expressed in all tissues with cell division activities and in mature leaves.

The protein localises to the cytoplasm. It localises to the nucleus. The catalysed reaction is S-ubiquitinyl-[E1 ubiquitin-activating enzyme]-L-cysteine + [E2 ubiquitin-conjugating enzyme]-L-cysteine = [E1 ubiquitin-activating enzyme]-L-cysteine + S-ubiquitinyl-[E2 ubiquitin-conjugating enzyme]-L-cysteine.. It functions in the pathway protein modification; protein ubiquitination. Its function is as follows. Accepts the ubiquitin from the E1 complex and catalyzes its covalent attachment to other proteins. Part of the anaphase-promoting complex (APC). May have a key function during cell cycle and be involved in cyclin B1 degradation. Triggers OR ubiquitination that mediates its subsequent nuclear localization. Involved in the repression of early light-induced proteins (ELIPs, e.g. ELIP1 and ELIP2) expression, probably via OR nuclear relocalization. The polypeptide is Ubiquitin-conjugating enzyme E2 19 (Arabidopsis thaliana (Mouse-ear cress)).